A 125-amino-acid chain; its full sequence is MEAALAIATLVLVLVLCLAGVTAVSMQVRCIDAAREAARLAARGDVRSATDVARSIAPRAALVQVHRDGEFVVATVTAHSNLLPTLDIAARAISVAEPGSTAARPPCLPSRWSRCCCASPVRVHI.

Positions 1 to 33 (MEAALAIATLVLVLVLCLAGVTAVSMQVRCIDA) are cleaved as a signal peptide.

As to quaternary structure, interacts with human E3 ubiquitin-protein ligase RNF213.

It localises to the secreted. The protein resides in the host cytoplasm. Functionally, effector protein that participates in the suppression of macrophage apoptosis by blocking the extrinsic pathway. Interferes with caspase-8 activation and binds to the host E3 ubiquitin-protein ligase RNF213, whose fusion partners have anti-apoptotic function. In Mycobacterium tuberculosis (strain ATCC 25618 / H37Rv), this protein is Apoptosis inhibitor Rv3655c.